The primary structure comprises 258 residues: Thiazole synthase (258 aa).

The active-site Schiff-base intermediate with DXP is Lys-100. 1-deoxy-D-xylulose 5-phosphate contacts are provided by residues Gly-161, 187 to 188, and 209 to 210; these read AG and NT.

The protein belongs to the ThiG family. Homotetramer. Forms heterodimers with either ThiH or ThiS.

The protein resides in the cytoplasm. It catalyses the reaction [ThiS sulfur-carrier protein]-C-terminal-Gly-aminoethanethioate + 2-iminoacetate + 1-deoxy-D-xylulose 5-phosphate = [ThiS sulfur-carrier protein]-C-terminal Gly-Gly + 2-[(2R,5Z)-2-carboxy-4-methylthiazol-5(2H)-ylidene]ethyl phosphate + 2 H2O + H(+). Its pathway is cofactor biosynthesis; thiamine diphosphate biosynthesis. Its function is as follows. Catalyzes the rearrangement of 1-deoxy-D-xylulose 5-phosphate (DXP) to produce the thiazole phosphate moiety of thiamine. Sulfur is provided by the thiocarboxylate moiety of the carrier protein ThiS. In vitro, sulfur can be provided by H(2)S. The protein is Thiazole synthase of Campylobacter jejuni subsp. doylei (strain ATCC BAA-1458 / RM4099 / 269.97).